The sequence spans 166 residues: Crossover junction endodeoxyribonuclease RuvC (166 aa).

Residues Asp-7, Glu-70, and His-143 contribute to the active site. Asp-7, Glu-70, and His-143 together coordinate Mg(2+).

Belongs to the RuvC family. In terms of assembly, homodimer which binds Holliday junction (HJ) DNA. The HJ becomes 2-fold symmetrical on binding to RuvC with unstacked arms; it has a different conformation from HJ DNA in complex with RuvA. In the full resolvosome a probable DNA-RuvA(4)-RuvB(12)-RuvC(2) complex forms which resolves the HJ. Mg(2+) is required as a cofactor.

It is found in the cytoplasm. The catalysed reaction is Endonucleolytic cleavage at a junction such as a reciprocal single-stranded crossover between two homologous DNA duplexes (Holliday junction).. In terms of biological role, the RuvA-RuvB-RuvC complex processes Holliday junction (HJ) DNA during genetic recombination and DNA repair. Endonuclease that resolves HJ intermediates. Cleaves cruciform DNA by making single-stranded nicks across the HJ at symmetrical positions within the homologous arms, yielding a 5'-phosphate and a 3'-hydroxyl group; requires a central core of homology in the junction. The consensus cleavage sequence is 5'-(A/T)TT(C/G)-3'. Cleavage occurs on the 3'-side of the TT dinucleotide at the point of strand exchange. HJ branch migration catalyzed by RuvA-RuvB allows RuvC to scan DNA until it finds its consensus sequence, where it cleaves and resolves the cruciform DNA. The sequence is that of Crossover junction endodeoxyribonuclease RuvC from Thermus thermophilus (strain ATCC BAA-163 / DSM 7039 / HB27).